The following is a 666-amino-acid chain: N-acetylgalactosaminyltransferase 6 (666 aa).

The Cytoplasmic segment spans residues 1–11 (MRRPNLKWIVK). A helical; Signal-anchor for type II membrane protein transmembrane segment spans residues 12–31 (ASLLLLISLTLFVLITSWIS). Over 32-666 (STPYTNKPVH…NYSQDLVLSL (635 aa)) the chain is Lumenal. The segment at 90–126 (EPVEEEVDNPHPADDEPQQQPQEELQMAAPADASVKK) is disordered. Residues 107-120 (QQQPQEELQMAAPA) show a composition bias toward low complexity. A glycan (N-linked (GlcNAc...) asparagine) is linked at Asn-181. 5 disulfide bridges follow: Cys-192/Cys-421, Cys-412/Cys-491, Cys-531/Cys-548, Cys-577/Cys-594, and Cys-621/Cys-636. The interval 201 to 311 (LPTVSVIIIF…YNWLPPLLEP (111 aa)) is catalytic subdomain A. Residues Asp-242 and Arg-272 each coordinate substrate. An N-linked (GlcNAc...) asparagine glycan is attached at Asn-285. Asp-295 provides a ligand contact to Mn(2+). Ser-296 provides a ligand contact to substrate. His-297 contributes to the Mn(2+) binding site. Residues 367–429 (PFKSPIMAGG…PCSRIGHIYR (63 aa)) form a catalytic subdomain B region. Position 398 (Trp-398) interacts with substrate. His-426 contacts Mn(2+). Arg-429 serves as a coordination point for substrate. The region spanning 518 to 648 (AMGALQNVGN…DNRFQQWNFG (131 aa)) is the Ricin B-type lectin domain. Residues Asn-651 and Asn-657 are each glycosylated (N-linked (GlcNAc...) asparagine).

It belongs to the glycosyltransferase 2 family. GalNAc-T subfamily. The cofactor is Mn(2+). Expressed during oogenesis, in the somatically derived follicle cells that surround the developing oocyte, which are involved in the maturation of the oocyte and construction of the egg shell, as well as playing a role in subsequent embryonic pattern formation. Expressed in the salivary glands from embryonic stage 12 onwards, becoming stronger at stage 13. During embryonic stages 12-13, also expressed in the posterior midgut and hindgut. During embryonic stages 14-15, expression continues in the hindgut. Expression is detected in the epidermis and antennomaxillary complex during embryonic stages 16-17. In third instar larvae, ubiquitously expressed in wing, eye-antennal, leg and haltere imaginal disks.

It localises to the golgi apparatus membrane. It catalyses the reaction L-seryl-[protein] + UDP-N-acetyl-alpha-D-galactosamine = a 3-O-[N-acetyl-alpha-D-galactosaminyl]-L-seryl-[protein] + UDP + H(+). The catalysed reaction is L-threonyl-[protein] + UDP-N-acetyl-alpha-D-galactosamine = a 3-O-[N-acetyl-alpha-D-galactosaminyl]-L-threonyl-[protein] + UDP + H(+). It functions in the pathway protein modification; protein glycosylation. In terms of biological role, glycopeptide transferase involved in O-linked oligosaccharide biosynthesis, which catalyzes the transfer of an N-acetyl-D-galactosamine residue to an already glycosylated peptide. In contrast to other proteins of the family, it does not act as a peptide transferase that transfers GalNAc onto serine or threonine residue on the protein receptor, but instead requires the prior addition of a GalNAc on a peptide before adding additional GalNAc moieties. Some peptide transferase activity is however not excluded, considering that its appropriate peptide substrate may remain unidentified. Prefers the diglycosylated Muc5AC-3/13 as substrate. Might have a role in protein O-glycosylation in the Golgi and thereby in establishing and/or maintaining a proper secretory apparatus structure. The polypeptide is N-acetylgalactosaminyltransferase 6 (Drosophila melanogaster (Fruit fly)).